Here is a 77-residue protein sequence, read N- to C-terminus: UPF0349 protein lwe2340 (77 aa).

It belongs to the UPF0349 family.

This Listeria welshimeri serovar 6b (strain ATCC 35897 / DSM 20650 / CCUG 15529 / CIP 8149 / NCTC 11857 / SLCC 5334 / V8) protein is UPF0349 protein lwe2340.